Reading from the N-terminus, the 654-residue chain is Pentatricopeptide repeat-containing protein At3g16610 (654 aa).

PPR repeat units follow at residues 1 to 32 (MFLS…SLTL), 34 to 64 (SSTV…IPHP), 67 to 101 (NPIA…GVRP), 102 to 136 (TKYT…DFAT), 137 to 171 (DMYV…DMVA), 172 to 203 (WNAM…GLSP), 204 to 238 (NLST…GFSN), 239 to 269 (DLVV…DFKK), 270 to 304 (NEVT…DNVA), 307 to 341 (TPVA…GFIL), 342 to 372 (DLTV…IGLK), 373 to 407 (DVIS…GIRP), 408 to 442 (DITT…GYAV), 443 to 473 (NTSI…MHKR), 474 to 508 (DIVS…GVNP), 509 to 543 (DEVT…DFNV), and 546 to 576 (RIDH…MPFE). Positions 581-654 (VLGTLLSACW…KTPGYSWVDV (74 aa)) are type E motif; degenerate.

Belongs to the PPR family. PCMP-E subfamily.

The polypeptide is Pentatricopeptide repeat-containing protein At3g16610 (PCMP-E91) (Arabidopsis thaliana (Mouse-ear cress)).